The sequence spans 443 residues: Glutamyl-tRNA reductase (443 aa).

Substrate-binding positions include 49-52, Ser109, 114-116, and Gln120; these read TCNR and EQQ. Residue Cys50 is the Nucleophile of the active site. Residue 189–194 coordinates NADP(+); that stretch reads GAGSMG.

The protein belongs to the glutamyl-tRNA reductase family. In terms of assembly, homodimer.

The enzyme catalyses (S)-4-amino-5-oxopentanoate + tRNA(Glu) + NADP(+) = L-glutamyl-tRNA(Glu) + NADPH + H(+). The protein operates within porphyrin-containing compound metabolism; protoporphyrin-IX biosynthesis; 5-aminolevulinate from L-glutamyl-tRNA(Glu): step 1/2. Catalyzes the NADPH-dependent reduction of glutamyl-tRNA(Glu) to glutamate 1-semialdehyde (GSA). This is Glutamyl-tRNA reductase from Mycobacteroides abscessus (strain ATCC 19977 / DSM 44196 / CCUG 20993 / CIP 104536 / JCM 13569 / NCTC 13031 / TMC 1543 / L948) (Mycobacterium abscessus).